We begin with the raw amino-acid sequence, 437 residues long: tRNA pseudouridine synthase Pus10 (437 aa).

The region spanning 76–198 is the THUMP domain; it reads VARDVVEHLS…GGGVDIQVNS (123 aa). Asp253 acts as the Nucleophile in catalysis. 2 residues coordinate substrate: Tyr321 and Tyr394.

Belongs to the pseudouridine synthase Pus10 family.

The enzyme catalyses uridine(54) in tRNA = pseudouridine(54) in tRNA. The catalysed reaction is uridine(55) in tRNA = pseudouridine(55) in tRNA. Functionally, responsible for synthesis of pseudouridine from uracil-54 and uracil-55 in the psi GC loop of transfer RNAs. The protein is tRNA pseudouridine synthase Pus10 of Aeropyrum pernix (strain ATCC 700893 / DSM 11879 / JCM 9820 / NBRC 100138 / K1).